A 237-amino-acid polypeptide reads, in one-letter code: Sugar fermentation stimulation protein homolog (237 aa).

This sequence belongs to the SfsA family.

In Thioalkalivibrio sulfidiphilus (strain HL-EbGR7), this protein is Sugar fermentation stimulation protein homolog.